The sequence spans 864 residues: Putative Gly-rich membrane protein Bcell_0380 (864 aa).

Residues 7-27 (ITFLAAFICIIFVIYAIYHSV) traverse the membrane as a helical segment. A disordered region spans residues 372 to 399 (TVENSFYDEDTTGQSDTGKGTPMSTADM). Residues 383–395 (TGQSDTGKGTPMS) show a composition bias toward polar residues.

It is found in the cell membrane. In Evansella cellulosilytica (strain ATCC 21833 / DSM 2522 / FERM P-1141 / JCM 9156 / N-4) (Bacillus cellulosilyticus), this protein is Putative Gly-rich membrane protein Bcell_0380.